An 855-amino-acid chain; its full sequence is DNA mismatch repair protein MutS (855 aa).

Glycine 616–serine 623 serves as a coordination point for ATP.

This sequence belongs to the DNA mismatch repair MutS family.

Functionally, this protein is involved in the repair of mismatches in DNA. It is possible that it carries out the mismatch recognition step. This protein has a weak ATPase activity. This Salmonella paratyphi A (strain ATCC 9150 / SARB42) protein is DNA mismatch repair protein MutS.